A 718-amino-acid chain; its full sequence is Heme peroxidase 2 (718 aa).

Residues 1 to 19 (MNLKPTILLFTILFLKCAT) form the signal peptide. Positions 20–146 (FEVNEETERI…QANRRCSSPP (127 aa)) are excised as a propeptide. Disordered stretches follow at residues 41–64 (RASE…ANSD) and 108–144 (LLQS…RCSS). Residues 45-64 (NSESEQTSQHIIVSQQANSD) are compositionally biased toward polar residues. Residues 109 to 118 (LQSSETTTTT) show a composition bias toward low complexity. A compositionally biased stretch (basic residues) spans 126 to 139 (SKRSAIFRSKRQAN). A disulfide bridge links C149 with C164. Residue H241 is the Proton acceptor of the active site. Residue D242 participates in Ca(2+) binding. C262 and C272 are disulfide-bonded. 4 residues coordinate Ca(2+): S311, F313, D315, and S317. N-linked (GlcNAc...) asparagine glycosylation occurs at N354. C358 and C366 are joined by a disulfide. H477 lines the heme b pocket. 4 N-linked (GlcNAc...) asparagine glycosylation sites follow: N551, N592, N662, and N673. A disulfide bridge links C682 with C705.

The protein belongs to the peroxidase family. Heme b serves as cofactor. In terms of tissue distribution, expressed in the hypodermis and gland cells of the pharynx. Specifically, there is low and transient expression from the distal bulb of the pharynx to the anterior of the buccal cavity. Whole body expression levels increase upon entry into the dauer phase.

Its subcellular location is the secreted. The catalysed reaction is 2 a phenolic donor + H2O2 = 2 a phenolic radical donor + 2 H2O. Peroxidase which is involved in maintaining the cuticle integrity in the hypodermis and pharynx. It thus plays a role in conferring resistance against Gram-positive bacteria such as E.faecalis, S.aureus and C.diphtheriae, and yeast such as C.albicans. The polypeptide is Heme peroxidase 2 (Caenorhabditis elegans).